The primary structure comprises 450 residues: Salicylate synthase (450 aa).

Glutamate 252 serves as the catalytic Proton donor. 270–271 (GT) is a binding site for substrate. Glutamate 297 lines the Mg(2+) pocket. Residues tyrosine 385, arginine 405, and 419–421 (GAG) contribute to the substrate site. Mg(2+) is bound by residues glutamate 431 and glutamate 434. Lysine 438 lines the substrate pocket.

The protein belongs to the anthranilate synthase component I family. Salicylate synthase subfamily. As to quaternary structure, monomer. It depends on Mg(2+) as a cofactor.

It carries out the reaction chorismate = isochorismate. The catalysed reaction is isochorismate = salicylate + pyruvate. It catalyses the reaction chorismate = prephenate. It participates in siderophore biosynthesis; mycobactin biosynthesis. Functionally, involved in the incorporation of salicylate into the virulence-conferring salicylate-based siderophore mycobactin. Catalyzes the initial conversion of chorismate to yield the intermediate isochorismate (isochorismate synthase activity), and the subsequent elimination of the enolpyruvyl side chain in a lyase reaction to give salicylate (isochorismate pyruvate-lyase activity). In the absence of magnesium, MbtI displays a chorismate mutase activity and converts chorismate to prephenate. In Mycobacterium bovis (strain ATCC BAA-935 / AF2122/97), this protein is Salicylate synthase (mbtI).